We begin with the raw amino-acid sequence, 462 residues long: Lipase A (462 aa).

The signal sequence occupies residues 1-21; it reads MRVSLRSITSLLAAATAAVLA. Cysteine 122 and cysteine 294 form a disulfide bridge. Catalysis depends on charge relay system residues serine 205, aspartate 355, and histidine 387. Cysteine 371 and cysteine 415 are joined by a disulfide.

The protein belongs to the AB hydrolase superfamily. Lipase family. In terms of assembly, monomer.

The protein resides in the secreted. It carries out the reaction a triacylglycerol + H2O = a diacylglycerol + a fatty acid + H(+). Functionally, hydrolyzes triglycerides, with a preference for substrates with short-chain lengths (C4 to C8). Has the highest activity with tributyrin (C4), followed by tricaproin (C6) and tricaprylin (C8). Can also hydrolyze vinylacetate (C2) and triolein (C18), but with lower efficiency. Has no activity with tripalmitin (C16). The sequence is that of Lipase A from Moesziomyces aphidis (Pseudozyma aphidis).